The chain runs to 564 residues: Urocanate hydratase (564 aa).

NAD(+) contacts are provided by residues 54-55 (GG), Q132, 178-180 (GMG), E198, R203, 244-245 (NA), 269-273 (QTSAH), 279-280 (YL), and Y328. C416 is a catalytic residue. Position 498 (G498) interacts with NAD(+).

This sequence belongs to the urocanase family. In terms of assembly, homodimer. NAD(+) is required as a cofactor.

It catalyses the reaction 4-imidazolone-5-propanoate = trans-urocanate + H2O. It participates in amino-acid degradation; L-histidine degradation into L-glutamate; N-formimidoyl-L-glutamate from L-histidine: step 2/3. This chain is Urocanate hydratase, found in Trifolium repens (Creeping white clover).